Consider the following 116-residue polypeptide: Putative iron-sulfur cluster insertion protein ErpA (116 aa).

Positions 44, 108, and 110 each coordinate iron-sulfur cluster.

It belongs to the HesB/IscA family. As to quaternary structure, homodimer. The cofactor is iron-sulfur cluster.

Its function is as follows. Required for insertion of 4Fe-4S clusters. This is Putative iron-sulfur cluster insertion protein ErpA from Dechloromonas aromatica (strain RCB).